Consider the following 125-residue polypeptide: Mesotocin-neurophysin MT (125 aa).

The N-terminal stretch at 1–19 (MSYTALAVTFFGWLALSSA) is a signal peptide. The cysteines at positions 20 and 25 are disulfide-linked. At G28 the chain carries Glycine amide. Intrachain disulfides connect C42–C86, C45–C59, C53–C76, C60–C66, C93–C106, C100–C118, and C107–C112.

Belongs to the vasopressin/oxytocin family. Mesotocin is produced by magnocellular preoptic neurons in the hypothalamus in amphibians, reptiles and birds.

The protein resides in the secreted. In terms of biological role, mesotocin is a diuretic hormone. This is Mesotocin-neurophysin MT from Bufo japonicus (Japanese common toad).